A 539-amino-acid chain; its full sequence is Chaperonin GroEL (539 aa).

ATP-binding positions include 29–32, 86–90, glycine 413, and aspartate 492; these read TLGP and DGTTT.

This sequence belongs to the chaperonin (HSP60) family. As to quaternary structure, forms a cylinder of 14 subunits composed of two heptameric rings stacked back-to-back. Interacts with the co-chaperonin GroES.

The protein localises to the cytoplasm. The enzyme catalyses ATP + H2O + a folded polypeptide = ADP + phosphate + an unfolded polypeptide.. Its function is as follows. Together with its co-chaperonin GroES, plays an essential role in assisting protein folding. The GroEL-GroES system forms a nano-cage that allows encapsulation of the non-native substrate proteins and provides a physical environment optimized to promote and accelerate protein folding. The polypeptide is Chaperonin GroEL (Fusobacterium nucleatum subsp. polymorphum (Fusobacterium polymorphum)).